The primary structure comprises 547 residues: Chaperonin GroEL 2 (547 aa).

ATP is bound by residues 30 to 33 (TLGP), K51, 87 to 91 (DGTTT), G415, and D496.

This sequence belongs to the chaperonin (HSP60) family. Forms a cylinder of 14 subunits composed of two heptameric rings stacked back-to-back. Interacts with the co-chaperonin GroES.

It is found in the cytoplasm. It carries out the reaction ATP + H2O + a folded polypeptide = ADP + phosphate + an unfolded polypeptide.. Together with its co-chaperonin GroES, plays an essential role in assisting protein folding. The GroEL-GroES system forms a nano-cage that allows encapsulation of the non-native substrate proteins and provides a physical environment optimized to promote and accelerate protein folding. In Rhodopseudomonas palustris (strain ATCC BAA-98 / CGA009), this protein is Chaperonin GroEL 2.